Consider the following 454-residue polypeptide: Isthmin-1 (454 aa).

Positions 1-29 (MVRLAAELLLLLGLLLLTLHITVLRGSGA) are cleaved as a signal peptide. Disordered regions lie at residues 29 to 93 (ASDR…PRSF), 125 to 144 (PDSE…WSLP), and 161 to 209 (TNSG…STDG). Polar residues predominate over residues 38-55 (GNNNLNLESDSTSETSFP). A compositionally biased stretch (basic and acidic residues) spans 128-137 (EAEKDQHPEN). The TSP type-1 domain maps to 208 to 252 (DGEGDWSLWSVCSVTCGNGNQKRTRSCGYACIATESRTCDRPNCP). 3 disulfide bridges follow: Cys-219–Cys-246, Cys-223–Cys-251, and Cys-234–Cys-238. Positions 279 to 442 (LFEVDMDSCE…QKCTESPSDE (164 aa)) constitute an AMOP domain.

Belongs to the isthmin family. In terms of assembly, interacts with integrin ITGAV/ITGB5.

It is found in the secreted. In terms of biological role, acts as an angiogenesis inhibitor. In Mus musculus (Mouse), this protein is Isthmin-1 (Ism1).